We begin with the raw amino-acid sequence, 81 residues long: Large ribosomal subunit protein bL27 (81 aa).

The tract at residues 1 to 22 is disordered; the sequence is MAHKKGQGSSRNGRDSNAQRRG.

This sequence belongs to the bacterial ribosomal protein bL27 family.

In Rhodopirellula baltica (strain DSM 10527 / NCIMB 13988 / SH1), this protein is Large ribosomal subunit protein bL27.